A 289-amino-acid chain; its full sequence is 2-hydroxy-6-oxononadienedioate/2-hydroxy-6-oxononatrienedioate hydrolase (289 aa).

His269 serves as the catalytic Proton acceptor.

It belongs to the AB hydrolase superfamily. MhpC family. Homodimer.

The enzyme catalyses (2Z,4E)-2-hydroxy-6-oxonona-2,4-dienedioate + H2O = (2Z)-2-hydroxypenta-2,4-dienoate + succinate + H(+). It carries out the reaction (2Z,4E,7E)-2-hydroxy-6-oxonona-2,4,7-trienedioate + H2O = (2Z)-2-hydroxypenta-2,4-dienoate + fumarate + H(+). Its pathway is aromatic compound metabolism; 3-phenylpropanoate degradation. Catalyzes the cleavage of the C5-C6 bond of 2-hydroxy-6-oxononadienedioate and 2-hydroxy-6-oxononatrienedioate, a dienol ring fission product of the bacterial meta-cleavage pathway for degradation of phenylpropionic acid. The chain is 2-hydroxy-6-oxononadienedioate/2-hydroxy-6-oxononatrienedioate hydrolase from Cupriavidus pinatubonensis (strain JMP 134 / LMG 1197) (Cupriavidus necator (strain JMP 134)).